Here is a 233-residue protein sequence, read N- to C-terminus: Octanoyltransferase (233 aa).

The 181-residue stretch at 34 to 214 (GQAPSTVLLL…EFSAREATLI (181 aa)) folds into the BPL/LPL catalytic domain. Substrate contacts are provided by residues 72 to 79 (RGGKLTWH), 144 to 146 (AIG), and 157 to 159 (GFS). C175 functions as the Acyl-thioester intermediate in the catalytic mechanism.

This sequence belongs to the LipB family.

It localises to the cytoplasm. The catalysed reaction is octanoyl-[ACP] + L-lysyl-[protein] = N(6)-octanoyl-L-lysyl-[protein] + holo-[ACP] + H(+). Its pathway is protein modification; protein lipoylation via endogenous pathway; protein N(6)-(lipoyl)lysine from octanoyl-[acyl-carrier-protein]: step 1/2. In terms of biological role, catalyzes the transfer of endogenously produced octanoic acid from octanoyl-acyl-carrier-protein onto the lipoyl domains of lipoate-dependent enzymes. Lipoyl-ACP can also act as a substrate although octanoyl-ACP is likely to be the physiological substrate. This chain is Octanoyltransferase, found in Renibacterium salmoninarum (strain ATCC 33209 / DSM 20767 / JCM 11484 / NBRC 15589 / NCIMB 2235).